The primary structure comprises 430 residues: MVSVDPLATERWRSIRRLTDRDSAYKVPWFVPGPENFEALQNTKILVIGAGGLGCELLKNLALSGFRTIEVIDMDTIDVSNLNRQFLFRESDVGKSKAEVAAAFVQQRVVGCQVTAHNCRIEDKGQEFYRKFSIIICGLDSIPARRWINGMLCDLVLEMADGKPDENTIIPMIDGGTEGFKGNARVIYPKFTACIDCTLDLYPPQVNFPLCTIAHTPRLPEHCIEYIKVVVWPEEKPFEGVSLDADDPIHVEWVLERASLRAEKYNIRGVDRRLTSGVLKRIIPAVASTNAVIAASCALEALKLATNIAKPIDNYLNFTQIHGAYTSVVSMMKDDNCLTCSGGRLPFEVSPSSTLESLIIRLSERFHLKHPTLATSTRKLYCISSFMPQFEQESKENLHTSMKDLVSDGEEILVSDEALSRALTLRIQLI.

Residue 52–76 coordinates ATP; sequence GLGCELLKNLALSGFRTIEVIDMDT. Cys211 functions as the Glycyl thioester intermediate in the catalytic mechanism.

This sequence belongs to the ubiquitin-activating E1 family. UBA3 subfamily. In terms of assembly, heterodimer of uba-3 and ula-1. Interacts with NEDD8 and ubc-12. As to expression, expressed in intestine, vulva epithelium and head and tail neurons.

The protein resides in the nucleus. It localises to the cytoplasm. It carries out the reaction ATP + [NEDD8 protein] + [E1 NEDD8-activating enzyme]-L-cysteine = AMP + diphosphate + [E1 NEDD8-activating enzyme]-S-[NEDD8 protein]-yl-L-cysteine.. It functions in the pathway protein modification; protein neddylation. Functionally, catalytic subunit of the dimeric rfl-1 (uba-3)-ula-1 E1 enzyme. E1 activates NEDD8 by first adenylating its C-terminal glycine residue with ATP, thereafter linking this residue to the side chain of the catalytic cysteine, yielding a NEDD8-uba-3 thioester and free AMP. E1 finally transfers NEDD8 to the catalytic cysteine of ubc-12. Required for cytokinesis and mitotic spindle orientation during early embryogenesis. This is NEDD8-activating enzyme E1 catalytic subunit from Caenorhabditis elegans.